Consider the following 89-residue polypeptide: Small ribosomal subunit protein uS15 (89 aa).

It belongs to the universal ribosomal protein uS15 family. As to quaternary structure, part of the 30S ribosomal subunit. Forms a bridge to the 50S subunit in the 70S ribosome, contacting the 23S rRNA.

Its function is as follows. One of the primary rRNA binding proteins, it binds directly to 16S rRNA where it helps nucleate assembly of the platform of the 30S subunit by binding and bridging several RNA helices of the 16S rRNA. Functionally, forms an intersubunit bridge (bridge B4) with the 23S rRNA of the 50S subunit in the ribosome. This is Small ribosomal subunit protein uS15 from Vibrio parahaemolyticus serotype O3:K6 (strain RIMD 2210633).